We begin with the raw amino-acid sequence, 429 residues long: Probable proton-coupled zinc antiporter SLC30A4 (429 aa).

The Cytoplasmic segment spans residues 1–113 (MAGSGAWKRL…ILKQRKVKAR (113 aa)). A helical transmembrane segment spans residues 114–134 (LTIAAVLYLLFMIGELVGGYI). Residues 135–143 (ANSLAIMTD) lie on the Lumenal side of the membrane. A helical transmembrane segment spans residues 144–164 (ALHMLTDLSAIILTLLALWLS). Positions 146 and 150 each coordinate Zn(2+). Over 165 to 178 (SKSPTKRFTFGFHR) the chain is Cytoplasmic. A helical membrane pass occupies residues 179 to 199 (LEVLSAMISVLLVYILMGFLL). The Lumenal segment spans residues 200-216 (YEAVQRTIHMNYEINGD). A helical transmembrane segment spans residues 217 to 237 (IMLITAAVGVAVNVIMGFLLN). At 238 to 274 (QSGHRHSHSHSLPSNSPTRGSGCERNHGQDSLAVRAA) the chain is on the cytoplasmic side. A zinc binding region spans residues 240 to 264 (GHRHSHSHSLPSNSPTRGSGCERNH). Residues 275–295 (FVHALGDLVQSVGVLIAAYII) form a helical membrane-spanning segment. Residues H277 and D281 each coordinate Zn(2+). Over 296-310 (RFKPEYKIADPICTY) the chain is Lumenal. A helical transmembrane segment spans residues 311 to 331 (VFSLLVAFTTFRIIWDTVVII). Residues 332–429 (LEGVPSHLNV…TCANCQSSSP (98 aa)) are Cytoplasmic-facing.

It belongs to the cation diffusion facilitator (CDF) transporter (TC 2.A.4) family. SLC30A subfamily. Homodimer; dityrosine-linked. Homodimerization could be specific of the human protein and enhances the zinc transport efficiency. Interacts with TMEM163. In terms of processing, homodimerization through dityrosine bonds is stimulated by oxidative stress.

Its subcellular location is the endosome membrane. The protein resides in the late endosome membrane. It is found in the lysosome membrane. It catalyses the reaction Zn(2+)(in) + 2 H(+)(out) = Zn(2+)(out) + 2 H(+)(in). In terms of biological role, probable proton-coupled zinc ion antiporter mediating zinc import from cytoplasm potentially into the endocytic compartment. Controls zinc deposition in milk. In Homo sapiens (Human), this protein is Probable proton-coupled zinc antiporter SLC30A4.